Here is a 224-residue protein sequence, read N- to C-terminus: Peroxynitrite isomerase 2 (224 aa).

A GXWXGXG motif is present at residues 71–77 (GVWRGEG). Heme b-binding residues include Lys187 and His214.

It belongs to the nitrobindin family. In terms of assembly, homodimer. Requires heme b as cofactor.

The catalysed reaction is peroxynitrite = nitrate. It participates in nitrogen metabolism. In terms of biological role, heme-binding protein able to scavenge peroxynitrite and to protect free L-tyrosine against peroxynitrite-mediated nitration, by acting as a peroxynitrite isomerase that converts peroxynitrite to nitrate. Therefore, this protein likely plays a role in peroxynitrite sensing and in the detoxification of reactive nitrogen and oxygen species (RNS and ROS, respectively). Is able to bind nitric oxide (NO) in vitro, but may act as a sensor of peroxynitrite levels in vivo. In Mycobacterium sp. (strain JLS), this protein is Peroxynitrite isomerase 2.